Consider the following 793-residue polypeptide: Nuclear cap-binding protein subunit 1 (793 aa).

The MIF4G domain maps to 28 to 242 (EKKLQEVIGK…SLSAQIENLR (215 aa)).

The protein belongs to the NCBP1 family. As to quaternary structure, component of the nuclear cap-binding complex (CBC), a heterodimer composed of ncbp-1 and ncbp-1 that interacts with m7GpppG-capped RNA.

The protein localises to the nucleus. Its function is as follows. Component of the cap-binding complex (CBC), which binds cotranscriptionally to the 5'-cap of pre-mRNAs and is involved in various processes such as pre-mRNA splicing and RNA-mediated gene silencing (RNAi). The CBC complex is involved in miRNA-mediated RNA interference and is required for primary microRNAs (miRNAs) processing. In the CBC complex, ncbp-1 does not bind directly capped RNAs (m7GpppG-capped RNA) but is required to stabilize the movement of the N-terminal loop of ncbp-2 and lock the CBC into a high affinity cap-binding state with the cap structure. In Caenorhabditis briggsae, this protein is Nuclear cap-binding protein subunit 1 (ncbp-1).